The primary structure comprises 341 residues: Processive diacylglycerol beta-glycosyltransferase (341 aa).

This sequence belongs to the glycosyltransferase 2 family. It depends on Mg(2+) as a cofactor.

The protein resides in the cell membrane. The enzyme catalyses a 1,2-diacyl-sn-glycerol + UDP-alpha-D-glucose = a 1,2-diacyl-3-O-(beta-D-glucopyranosyl)-sn-glycerol + UDP + H(+). It carries out the reaction a 1,2-diacyl-sn-glycerol + UDP-alpha-D-galactose = a 1,2-diacyl-3-O-(beta-D-galactosyl)-sn-glycerol + UDP + H(+). It catalyses the reaction a 1,2-diacyl-3-O-(beta-D-galactosyl)-sn-glycerol + UDP-alpha-D-glucose = a 1,2-diacyl-3-O-[beta-D-glucopyranosyl-(1-&gt;6)-beta-D-galactopyranosyl]-sn-glycerol + UDP + H(+). The catalysed reaction is a 1,2-diacyl-3-O-(beta-D-galactosyl)-sn-glycerol + UDP-alpha-D-galactose = a 1,2-diacyl-3-O-[beta-D-galactosyl-(1-&gt;6)-beta-D-galactosyl]-sn-glycerol + UDP + H(+). Activated by the negatively charged lipid phosphatidylglycerol (PG). In terms of biological role, processive glycosyltransferase involved in the biosynthesis of both the non-bilayer-prone beta-monoglycosyldiacylglycerol and the bilayer-forming membrane lipid glucosyl-galactosyldiacylglycerol and digalactosyl-diacylglycerol. These components contribute to regulate the properties and stability of the membrane. Catalyzes sequentially the transfers of glucosyl or galactosyl residues from UDP-Glc or UDP-Gal to diacylglycerol (DAG) acceptor to form the corresponding beta-glycosyl-DAG (3-O-(beta-D-glycopyranosyl)-1,2-diacyl-sn-glycerol). Then, only beta-galactosyl-DAG (3-O-(beta-D-galactopyranosyl)-1,2-diacyl-sn-glycerol) can act as acceptor to give the beta-glycosyl-beta-galactosyl-DAG product (3-O-(beta-D-glycopyranosyl-(1-&gt;6)-D-galactopyranosyl)-1,2-diacyl-sn-glycerol). It can also use alpha-Gal-beta-Gal-DAG, ceramide (Cer) and beta-Gal-Cer as sugar acceptors. The enzyme is supposed to be mainly a galactosyltransferase, with higher glycosyltransferase activity for the addition of the second glycosyl on beta-Gal-DAG as acceptor. The main glycolipid produced in vivo is beta-Glc-beta-Gal-DAG with a beta-1,6 linkage. This is Processive diacylglycerol beta-glycosyltransferase from Mycoplasma pneumoniae (strain ATCC 29342 / M129 / Subtype 1) (Mycoplasmoides pneumoniae).